A 453-amino-acid polypeptide reads, in one-letter code: Sensor histidine kinase CpxA (453 aa).

Residues 1 to 4 lie on the Cytoplasmic side of the membrane; the sequence is MTAR. Residues 5 to 25 form a helical membrane-spanning segment; it reads IFAIFWLTLALVLMLVLMLPK. The Periplasmic segment spans residues 26–159; the sequence is LDSRQMTELL…SDFINLLFDR (134 aa). Residues 160 to 180 traverse the membrane as a helical segment; it reads PLLLLIVTMLVSAPLLLWLAW. Positions 180–233 constitute an HAMP domain; it reads WSLAKPARKLKNAADEVAQGNLRQHPELEAGPQEFLAAGASFNQMVTALERMMT. The Cytoplasmic portion of the chain corresponds to 181–453; the sequence is SLAKPARKLK…TIWLPLYKRT (273 aa). Residues 241 to 451 enclose the Histidine kinase domain; it reads DISHELRTPL…RLTIWLPLYK (211 aa). The active-site Nucleophile is His-244. His-244 carries the post-translational modification Phosphohistidine; by autocatalysis. ATP contacts are provided by residues 244–247, 355–360, Asp-382, 401–402, and 412–417; these read HELR, RNALRY, RT, and GTGLGL.

In terms of assembly, interacts with cognate response regulator CpxR.

The protein resides in the cell inner membrane. The catalysed reaction is ATP + protein L-histidine = ADP + protein N-phospho-L-histidine.. Its activity is regulated as follows. The two-component system is activated by envelope stress such as overexpression of some (misfolded) periplasmic proteins. In terms of biological role, histidine kinase member of the two-component regulatory system CpxA/CpxR which responds to envelope stress response by activating or, in some cases, repressing expression of downstream genes. Activates CpxR by phosphorylation. This Klebsiella pneumoniae subsp. pneumoniae (strain HS11286) protein is Sensor histidine kinase CpxA.